We begin with the raw amino-acid sequence, 192 residues long: 3-isopropylmalate dehydratase small subunit (192 aa).

The protein belongs to the LeuD family. LeuD type 1 subfamily. As to quaternary structure, heterodimer of LeuC and LeuD.

The enzyme catalyses (2R,3S)-3-isopropylmalate = (2S)-2-isopropylmalate. Its pathway is amino-acid biosynthesis; L-leucine biosynthesis; L-leucine from 3-methyl-2-oxobutanoate: step 2/4. Its function is as follows. Catalyzes the isomerization between 2-isopropylmalate and 3-isopropylmalate, via the formation of 2-isopropylmaleate. The polypeptide is 3-isopropylmalate dehydratase small subunit (Oceanobacillus iheyensis (strain DSM 14371 / CIP 107618 / JCM 11309 / KCTC 3954 / HTE831)).